Here is a 111-residue protein sequence, read N- to C-terminus: Phosphoribosyl-ATP pyrophosphatase (111 aa).

The protein belongs to the PRA-PH family.

It is found in the cytoplasm. The catalysed reaction is 1-(5-phospho-beta-D-ribosyl)-ATP + H2O = 1-(5-phospho-beta-D-ribosyl)-5'-AMP + diphosphate + H(+). Its pathway is amino-acid biosynthesis; L-histidine biosynthesis; L-histidine from 5-phospho-alpha-D-ribose 1-diphosphate: step 2/9. This is Phosphoribosyl-ATP pyrophosphatase from Pseudomonas paraeruginosa (strain DSM 24068 / PA7) (Pseudomonas aeruginosa (strain PA7)).